Reading from the N-terminus, the 155-residue chain is DNA-directed RNA polymerases I, II, and III subunit RPABC2 (155 aa).

Residues 1–19 (MSDYEEAFNDGNENFEDFD) are compositionally biased toward acidic residues. The tract at residues 1 to 57 (MSDYEEAFNDGNENFEDFDVEHFSDEETYEEKPQFKDGETTDANGKTIVTGGNGPED) is disordered. Over residues 20 to 39 (VEHFSDEETYEEKPQFKDGE) the composition is skewed to basic and acidic residues. Ser24 is modified (phosphoserine). The segment at 111 to 132 (LEGETDPLRIAMKELAEKKIPL) is leucine-zipper.

The protein belongs to the archaeal Rpo6/eukaryotic RPB6 RNA polymerase subunit family. Component of the RNA polymerase I (Pol I), RNA polymerase II (Pol II) and RNA polymerase III (Pol III) complexes. Component of the RNA polymerase I (Pol I) complex consisting of 14 subunits: RPA135, RPA190, RPC40, RPA14, RPB5, RPO26, RPA43, RPB8, RPA12, RPB10, RPC19, RPC10, RPA49 and RPA34. The complex is composed of a horseshoe-shaped core containing ten subunits (RPA135, RPA190, RPB5, RPO26, RPB8, RPB10, RPC10, RPA12, RPC19 and RPC40) where RPA135 and RPA190 form the DNA-binding cleft. Outside of the core, RPA14 and RPA43 form the stalk that mediates interactions with transcription initiation factors and newly synthesized RNA. Component of the RNA polymerase II (Pol II) complex consisting of 12 subunits: RPO21, RPB2, RPB3, RPB4, RPB5, RPO26, RPB7, RPB8, RPB9, RPB10 and RPC10. Component of the RNA polymerase III (Pol III) complex consisting of 17 subunits.

The protein localises to the cytoplasm. It localises to the nucleus. Its function is as follows. DNA-dependent RNA polymerases catalyze the transcription of DNA into RNA using the four ribonucleoside triphosphates as substrates. Common component of RNA polymerases I, II and III which synthesize ribosomal RNA precursors, mRNA precursors and many functional non-coding RNAs, and small RNAs, such as 5S rRNA and tRNAs, respectively. Pol II is the central component of the basal RNA polymerase II transcription machinery. RNA polymerases are composed of mobile elements that move relative to each other. In Pol II, RPB6 is part of the clamp element and together with parts of RPB1 and RPB2 forms a pocket to which the RPB4-RPB7 subcomplex binds. In Saccharomyces cerevisiae (strain ATCC 204508 / S288c) (Baker's yeast), this protein is DNA-directed RNA polymerases I, II, and III subunit RPABC2 (RPO26).